The chain runs to 80 residues: MKARVEYIKLPRCYTKTYRKIEAKKNNDGTIELTLEETMQVISFKLPPALNAKLEQIAIKEKKSKSEIIRIALARYVENV.

Its function is as follows. Essential for virus function. This is an uncharacterized protein from Sulfolobus spindle-shape virus 1 (SSV1).